Reading from the N-terminus, the 95-residue chain is uncharacterized protein (95 aa).

This is an uncharacterized protein from Escherichia coli O6:H1 (strain CFT073 / ATCC 700928 / UPEC).